The following is a 368-amino-acid chain: Isocitrate dehydrogenase [NAD] regulatory subunit 3, mitochondrial (368 aa).

Residues 1-26 constitute a mitochondrion transit peptide; it reads MARRSVSIFNRLLANPPSPFTSLSRS.

The protein belongs to the isocitrate and isopropylmalate dehydrogenases family. As to quaternary structure, heterooligomer of catalytic and regulatory subunits. Interacts with 14-3-3-like proteins GRF1 GRF3 and GRF8. In terms of tissue distribution, mainly expressed at a low level in pollen.

The protein localises to the mitochondrion. Functionally, performs an essential role in the oxidative function of the citric acid cycle. This chain is Isocitrate dehydrogenase [NAD] regulatory subunit 3, mitochondrial (IDH3), found in Arabidopsis thaliana (Mouse-ear cress).